The primary structure comprises 200 residues: Putative AgrB-like protein (200 aa).

5 helical membrane-spanning segments follow: residues 49–69, 88–108, 114–134, 148–168, and 171–191; these read LIIT…LVFM, LLCT…IQFT, LFRF…SPAV, ALKH…FLVS, and LGTI…PLKG.

Belongs to the AgrB family.

Its subcellular location is the cell membrane. May be involved in the proteolytic processing of a quorum sensing system signal molecule precursor. The sequence is that of Putative AgrB-like protein from Lactiplantibacillus plantarum (strain ATCC BAA-793 / NCIMB 8826 / WCFS1) (Lactobacillus plantarum).